Here is a 1435-residue protein sequence, read N- to C-terminus: Sterol 3-beta-glucosyltransferase (1435 aa).

Disordered regions lie at residues 1–26 (MAPD…HQVA), 75–107 (SDEE…KFEG), 123–169 (RFSS…KDTP), and 185–206 (PSFE…RTSP). The span at 85-99 (TRQSSESHINRSSID) shows a compositional bias: polar residues. The segment covering 123–133 (RFSSRSKSKSS) has biased composition (low complexity). Residues 134–143 (NTIARGSRTP) are compositionally biased toward polar residues. The span at 189–206 (MPRKSKDPAEVDDERTSP) shows a compositional bias: basic and acidic residues. Residues 211-258 (ERLMEIFKFETPEDVLEEYPCWLMKSVLLQGYMYITTKHICFYAYLPK) enclose the GRAM 1 domain. Residues 262-360 (EVVKSGYLSK…WVKALQKIIF (99 aa)) form the PH domain. 4 disordered regions span residues 444–477 (LSTA…PNAP), 527–594 (DLNR…QASA), 610–671 (QHSP…QAEI), and 727–759 (GKKH…ATPA). Over residues 527-537 (DLNRLTTEHHR) the composition is skewed to basic and acidic residues. 3 stretches are compositionally biased toward polar residues: residues 539–554 (NSAN…STNR), 628–647 (KSRS…TRTQ), and 657–671 (TTGS…QAEI). The span at 729-742 (KHYEEPHGIPRDNE) shows a compositional bias: basic and acidic residues. The 67-residue stretch at 760–826 (DRFRDHFALP…KDIENVDKEK (67 aa)) folds into the GRAM 2 domain. UDP-alpha-D-glucose contacts are provided by Ser-949, Arg-950, Asp-952, Ala-1252, His-1254, His-1267, Gly-1271, Thr-1272, Asp-1291, and Gln-1292.

It belongs to the glycosyltransferase 28 family.

The protein resides in the cytoplasm. It is found in the preautophagosomal structure membrane. It carries out the reaction a sterol + UDP-alpha-D-glucose = a sterol 3-beta-D-glucoside + UDP + H(+). The catalysed reaction is ergosterol + UDP-alpha-D-glucose = ergosteryl 3-beta-D-glucoside + UDP + H(+). Its function is as follows. Sterol glycosyltransferase responsible for the glycosylation of ergosterol to form ergosterol-glucoside. In Sclerotinia sclerotiorum (strain ATCC 18683 / 1980 / Ss-1) (White mold), this protein is Sterol 3-beta-glucosyltransferase.